A 490-amino-acid polypeptide reads, in one-letter code: Cysteine protease 1 (490 aa).

An N-terminal signal peptide occupies residues 1–31 (MAGGGGKSVAAALAMACFLLILAAFAPPAAA). Positions 32–154 (APPDIMSIIR…EAYRHDGVEA (123 aa)) are cleaved as a propeptide — activation peptide. 5 disulfide bridges follow: Cys-177–Cys-220, Cys-211–Cys-253, Cys-311–Cys-364, Cys-395–Cys-407, and Cys-401–Cys-422. The active site involves Cys-180. Active-site residues include His-317 and Asn-339. A glycan (N-linked (GlcNAc...) asparagine) is linked at Asn-356. Positions 379 to 490 (NPKPSPPSPA…FVVLNREDLV (112 aa)) are cleaved as a propeptide — removed in mature form.

The protein belongs to the peptidase C1 family. Highly expressed in the tapetum and developing pollen of the anther locules. Weakly expressed in root and germinating seed, hardly in the anther-less-flower and not detected in leaf.

Cysteine protease that may play a role in pollen development. May be regulated by the transcription factor UDT1 in developing anthers and play a role in tapetum development. Positively regulated by the transcription factor TDR in developing anthers and may play a role in tapetum programmed cell death (PCD). This is Cysteine protease 1 (CP1) from Oryza sativa subsp. japonica (Rice).